Here is a 136-residue protein sequence, read N- to C-terminus: Small ribosomal subunit protein bS16 (136 aa).

The protein belongs to the bacterial ribosomal protein bS16 family.

This Pseudarthrobacter chlorophenolicus (strain ATCC 700700 / DSM 12829 / CIP 107037 / JCM 12360 / KCTC 9906 / NCIMB 13794 / A6) (Arthrobacter chlorophenolicus) protein is Small ribosomal subunit protein bS16.